We begin with the raw amino-acid sequence, 205 residues long: MAEPLQPDPGAAEDAAAQAVETPGWKAPEDAGPQPGSYEIRHYGPAKWVSTSVESMDWDSAIQTGFTKLNSYIQGKNEKEMKIKMTAPVTSYVEPGSGPFSESTITISLYIPSEQQFDPPRPLESDVFIEDRAEMTVFVRSFDGFSSAQKNQEQLLTLASILREDGKVFDEKVYYTAGYNSPVKLLNRNNEVWLIQKNEPTKENE.

A disordered region spans residues 1–39; it reads MAEPLQPDPGAAEDAAAQAVETPGWKAPEDAGPQPGSYE. An N-acetylalanine modification is found at Ala2. Ser181 is modified (phosphoserine).

The protein belongs to the HEBP family. As to quaternary structure, monomer. Interacts with LRPPRC. May interact with BCL2L1; an interaction with BCL2L1 was observed using a peptide, but not with the full-length protein. The full-length protein would have to undergo a major conformation change for the interaction to occur. Interacts with PDCD6. In terms of tissue distribution, detected in placenta.

The protein localises to the cytoplasm. Its subcellular location is the mitochondrion. Can promote mitochondrial permeability transition and facilitate necrotic cell death under different types of stress conditions. The protein is Heme-binding protein 2 (HEBP2) of Homo sapiens (Human).